The primary structure comprises 404 residues: RNA exonuclease 3 (404 aa).

A compositionally biased stretch (polar residues) spans 1–17 (MNNNAQNKRSLDDSNGN). The tract at residues 1 to 29 (MNNNAQNKRSLDDSNGNDTKRPKQEDPKY) is disordered. Residues 18–28 (DTKRPKQEDPK) are compositionally biased toward basic and acidic residues. The Exonuclease domain occupies 241-389 (VLGIDCEMGF…EDSIAAIDIV (149 aa)).

This sequence belongs to the REXO1/REXO3 family.

It localises to the cytoplasm. The protein resides in the nucleus. Functionally, 3' to 5' exoribonuclease required for proper 3' end maturation of MRP RNA and of the U5L snRNA. The polypeptide is RNA exonuclease 3 (REX3) (Candida albicans (strain SC5314 / ATCC MYA-2876) (Yeast)).